The following is a 71-amino-acid chain: SPbeta prophage-derived uncharacterized protein YopF (71 aa).

The chain is SPbeta prophage-derived uncharacterized protein YopF (yopF) from Bacillus subtilis (strain 168).